The primary structure comprises 2300 residues: Protein Ycf2 (2300 aa).

ATP is bound at residue 1642-1649; that stretch reads GSIGTGRS.

This sequence belongs to the Ycf2 family.

The protein resides in the plastid. The protein localises to the chloroplast stroma. Functionally, probable ATPase of unknown function. Its presence in a non-photosynthetic plant (Epifagus virginiana) and experiments in tobacco indicate that it has an essential function which is probably not related to photosynthesis. This Vitis vinifera (Grape) protein is Protein Ycf2.